Consider the following 397-residue polypeptide: Pentatricopeptide repeat-containing protein At1g80150, mitochondrial (397 aa).

Residues 1–81 (MLSLRHIRRF…FAFEDTVSRL (81 aa)) constitute a mitochondrion transit peptide. PPR repeat units lie at residues 105 to 139 (REGF…GCKR), 140 to 170 (SVKS…APSK), 176 to 210 (DAVS…GLTP), 211 to 245 (DVVT…GCKP), 246 to 280 (NLTT…QVEP), 281 to 315 (DSIT…GYKP), 316 to 350 (NLKI…KWYP), and 351 to 381 (NLDT…VHRR).

Belongs to the PPR family. P subfamily.

Its subcellular location is the mitochondrion. This chain is Pentatricopeptide repeat-containing protein At1g80150, mitochondrial, found in Arabidopsis thaliana (Mouse-ear cress).